A 66-amino-acid polypeptide reads, in one-letter code: U1-theraphotoxin-Cg1d 1 (66 aa).

The signal sequence occupies residues 1–21 (MKMSALFVIFGLALLFCNSFA). The propeptide occupies 22–29 (AELKATGR). Cystine bridges form between C31–C46, C38–C51, and C45–C58. A Proline amide modification is found at P63.

The protein belongs to the neurotoxin 10 (Hwtx-1) family. 46 (Jztx-7/10/12) subfamily. Expressed by the venom gland.

It is found in the secreted. In terms of biological role, probable ion channel inhibitor. This Chilobrachys guangxiensis (Chinese earth tiger tarantula) protein is U1-theraphotoxin-Cg1d 1.